The following is a 319-amino-acid chain: ATP-dependent 6-phosphofructokinase (319 aa).

Gly-11 lines the ATP pocket. Residue Arg-21–Arg-25 participates in ADP binding. Residues Arg-72–Cys-73 and Gly-102–Ser-105 contribute to the ATP site. Position 103 (Asp-103) interacts with Mg(2+). Thr-125–Asp-127 provides a ligand contact to substrate. Asp-127 serves as the catalytic Proton acceptor. Position 154 (Arg-154) interacts with ADP. Residues Arg-162 and Met-169–Arg-171 contribute to the substrate site. ADP-binding positions include Gly-185 to Glu-187, Arg-211, and Lys-213 to His-215. Substrate contacts are provided by residues Glu-222, Arg-243, and His-249–Arg-252.

Belongs to the phosphofructokinase type A (PFKA) family. ATP-dependent PFK group I subfamily. Prokaryotic clade 'B1' sub-subfamily. As to quaternary structure, homotetramer. Requires Mg(2+) as cofactor.

Its subcellular location is the cytoplasm. The enzyme catalyses beta-D-fructose 6-phosphate + ATP = beta-D-fructose 1,6-bisphosphate + ADP + H(+). It functions in the pathway carbohydrate degradation; glycolysis; D-glyceraldehyde 3-phosphate and glycerone phosphate from D-glucose: step 3/4. Allosterically activated by ADP and other diphosphonucleosides, and allosterically inhibited by phosphoenolpyruvate. Its function is as follows. Catalyzes the phosphorylation of D-fructose 6-phosphate to fructose 1,6-bisphosphate by ATP, the first committing step of glycolysis. The sequence is that of ATP-dependent 6-phosphofructokinase from Bacillus cereus (strain B4264).